A 337-amino-acid chain; its full sequence is GTP 3',8-cyclase (337 aa).

The 226-residue stretch at 17-242 folds into the Radical SAM core domain; that stretch reads TFQREYYYLR…RQKDRTDGPA (226 aa). A GTP-binding site is contributed by arginine 26. Residues cysteine 33 and cysteine 37 each contribute to the [4Fe-4S] cluster site. S-adenosyl-L-methionine is bound at residue tyrosine 39. Cysteine 40 is a binding site for [4Fe-4S] cluster. Arginine 76 is a binding site for GTP. An S-adenosyl-L-methionine-binding site is contributed by glycine 80. Position 107 (threonine 107) interacts with GTP. Serine 131 is an S-adenosyl-L-methionine binding site. Lysine 168 is a GTP binding site. An S-adenosyl-L-methionine-binding site is contributed by methionine 202. 2 residues coordinate [4Fe-4S] cluster: cysteine 265 and cysteine 268. 270–272 contributes to the GTP binding site; sequence RLR. Residue cysteine 282 participates in [4Fe-4S] cluster binding.

It belongs to the radical SAM superfamily. MoaA family. In terms of assembly, monomer and homodimer. [4Fe-4S] cluster serves as cofactor.

It catalyses the reaction GTP + AH2 + S-adenosyl-L-methionine = (8S)-3',8-cyclo-7,8-dihydroguanosine 5'-triphosphate + 5'-deoxyadenosine + L-methionine + A + H(+). It participates in cofactor biosynthesis; molybdopterin biosynthesis. Its function is as follows. Catalyzes the cyclization of GTP to (8S)-3',8-cyclo-7,8-dihydroguanosine 5'-triphosphate. This chain is GTP 3',8-cyclase, found in Mannheimia succiniciproducens (strain KCTC 0769BP / MBEL55E).